The chain runs to 1865 residues: Transient receptor potential cation channel subfamily M member 7 (1865 aa).

Methionine 1 is subject to N-acetylmethionine. The Cytoplasmic segment spans residues 1-850 (MSQKSWIEST…ITRKFYAFYH (850 aa)). Position 101 is a phosphoserine (serine 101). Residues 544-555 (NRRSGRNTSSST) show a composition bias toward low complexity. The disordered stretch occupies residues 544-575 (NRRSGRNTSSSTPQLRKSHESFGNRADKKEKM). Over residues 560 to 573 (KSHESFGNRADKKE) the composition is skewed to basic and acidic residues. A helical transmembrane segment spans residues 851–876 (APIVKFWFNTLAYLGFLMLYTFVVLV). At 877-882 (QMEQLP) the chain is on the extracellular side. The helical transmembrane segment at 883-904 (SVQEWIVIAYIFTYAIEKVREI) threads the bilayer. The Cytoplasmic portion of the chain corresponds to 905–923 (FMSEAGKVNQKIKVWFSDY). A helical transmembrane segment spans residues 924–943 (FNISDTIAIISFFIGFGLRF). The Extracellular segment spans residues 944 to 956 (GAKWNFANAYDNH). The helical transmembrane segment at 957 to 980 (VFVAGRLIYCLNIIFWYVRLLDFL) threads the bilayer. The Cytoplasmic segment spans residues 981–999 (AVNQQAGPYVMMIGKMVAN). A helical transmembrane segment spans residues 1000 to 1023 (MFYIVVIMALVLLSFGVPRKAILY). Residues 1024-1025 (PH) lie on the Extracellular side of the membrane. The pore-forming intramembrane region spans 1026-1066 (EAPSWTLAKDIVFHPYWMIFGEVYAYEIDVCANDSVIPQIC). Topologically, residues 1067–1069 (GPG) are extracellular. Residues 1070–1098 (TWLTPFLQAVYLFVQYIIMVNLLIAFFNN) form a helical membrane-spanning segment. The Cytoplasmic portion of the chain corresponds to 1099–1865 (VYLQVKAISN…ESTNSVRLML (767 aa)). 3 S-palmitoyl cysteine lipidation sites follow: cysteine 1143, cysteine 1144, and cysteine 1146. A Phosphothreonine; by autocatalysis modification is found at threonine 1163. Residues serine 1191 and serine 1193 each carry the phosphoserine; by autocatalysis modification. Residues 1198–1250 (RVTFERVEQMCIQIKEVGDRVNYIKRSLQSLDSQIGHLQDLSALTVDTLKTLT) are a coiled coil. Serine 1224 bears the Phosphoserine mark. Phosphoserine; by autocatalysis occurs at positions 1255 and 1258. The residue at position 1265 (threonine 1265) is a Phosphothreonine; by autocatalysis. Phosphoserine; by autocatalysis is present on serine 1287. The residue at position 1301 (serine 1301) is a Phosphoserine. At serine 1358 the chain carries Phosphoserine; by autocatalysis. Phosphoserine is present on residues serine 1361 and serine 1386. The span at 1386–1398 (SSSTSIPHLSSPP) shows a compositional bias: low complexity. Residues 1386–1407 (SSSTSIPHLSSPPTKFFVSTPS) form a disordered region. Serine 1387 and serine 1390 each carry phosphoserine; by autocatalysis. Phosphoserine is present on residues serine 1395 and serine 1396. Serine 1404 bears the Phosphoserine; by autocatalysis mark. Threonine 1405 bears the Phosphothreonine; by autocatalysis mark. Serine 1407 bears the Phosphoserine; by autocatalysis mark. Threonine 1435 carries the post-translational modification Phosphothreonine; by autocatalysis. The residue at position 1446 (serine 1446) is a Phosphoserine; by autocatalysis. Residue threonine 1455 is modified to Phosphothreonine; by autocatalysis. Serine 1456 and serine 1463 each carry phosphoserine; by autocatalysis. Threonine 1467 bears the Phosphothreonine mark. Serine 1468 carries the phosphoserine; by autocatalysis modification. Phosphothreonine; by autocatalysis is present on threonine 1471. Serine 1476 and serine 1477 each carry phosphoserine; by autocatalysis. Phosphothreonine; by autocatalysis is present on threonine 1482. Residues 1492–1511 (HSKQAEKISRRPSTEDTHEV) are disordered. A Phosphoserine; by autocatalysis modification is found at serine 1493. Over residues 1494–1511 (KQAEKISRRPSTEDTHEV) the composition is skewed to basic and acidic residues. Serine 1500 is modified (phosphoserine). Position 1504 is a phosphoserine; by autocatalysis (serine 1504). A Phosphothreonine; by autocatalysis modification is found at threonine 1508. Phosphoserine; by autocatalysis is present on residues serine 1513, serine 1527, and serine 1533. Residues 1524–1543 (DRPSNREMPSEEGTLNGLTS) form a disordered region. Residues threonine 1537 and threonine 1542 each carry the phosphothreonine; by autocatalysis modification. Serine 1543 carries the phosphoserine; by autocatalysis modification. Phosphothreonine; by autocatalysis is present on threonine 1551. Serine 1567 and serine 1569 each carry phosphoserine; by autocatalysis. Threonine 1583 bears the Phosphothreonine; by autocatalysis mark. The Alpha-type protein kinase domain maps to 1594–1824 (ILNNSMSSWS…CCRKLKLPDL (231 aa)). Serine 1598 and serine 1615 each carry phosphoserine; by autocatalysis. 5 residues coordinate ADP: glycine 1621, glycine 1622, leucine 1623, arginine 1624, and lysine 1648. Serine 1660 carries the phosphoserine; by autocatalysis modification. The residue at position 1685 (threonine 1685) is a Phosphothreonine; by autocatalysis. Positions 1720, 1721, and 1723 each coordinate ADP. Histidine 1753 serves as a coordination point for Zn(2+). The active-site Proton acceptor is the aspartate 1767. An ADP-binding site is contributed by aspartate 1777. Serine 1779 carries the post-translational modification Phosphoserine; by autocatalysis. Histidine 1810, cysteine 1812, and cysteine 1816 together coordinate Zn(2+). Residue threonine 1830 is modified to Phosphothreonine; by autocatalysis. Residues 1836–1865 (FPQDEPSDLNLQPGNSTKESESTNSVRLML) are disordered. Positions 1844-1865 (LNLQPGNSTKESESTNSVRLML) are enriched in polar residues. A Phosphoserine modification is found at serine 1851. A Phosphoserine; by autocatalysis modification is found at serine 1860.

In the C-terminal section; belongs to the protein kinase superfamily. Alpha-type protein kinase family. ALPK subfamily. It in the N-terminal section; belongs to the transient receptor (TC 1.A.4) family. LTrpC subfamily. TRPM7 sub-subfamily. As to quaternary structure, homotetramer. Interacts with PLCB1. Forms heteromers with TRPM6; heteromeric channels are functionally different from the homomeric channels. Zn(2+) is required as a cofactor. Palmitoylated; palmitoylation at Cys-1143, Cys-1144 and Cys-1146 promotes TRPM7 trafficking from the Golgi to the surface membrane. In terms of processing, autophosphorylated; autophosphorylation of C-terminus regulates TRPM7 kinase activity towards its substrates. Post-translationally, the C-terminal kinase domain can be cleaved from the channel segment in a cell-type-specific fashion. TRPM7 is cleaved by caspase-8, dissociating the kinase from the ion-conducting pore. The cleaved kinase fragments (M7CKs) can translocate to the cell nucleus and binds chromatin-remodeling complex proteins in a Zn(2+)-dependent manner to ultimately phosphorylate specific Ser/Thr residues of histones.

The protein localises to the cell membrane. The protein resides in the cytoplasmic vesicle membrane. It localises to the nucleus. The catalysed reaction is L-seryl-[protein] + ATP = O-phospho-L-seryl-[protein] + ADP + H(+). It catalyses the reaction L-threonyl-[protein] + ATP = O-phospho-L-threonyl-[protein] + ADP + H(+). It carries out the reaction Mg(2+)(in) = Mg(2+)(out). The enzyme catalyses Ca(2+)(in) = Ca(2+)(out). The catalysed reaction is Zn(2+)(in) = Zn(2+)(out). Channel displays constitutive activity. Channel activity is negatively regulated by cytosolic Mg(2+) and Mg-ATP. Channel activity is negatively regulated by low intracellular pH. Resting free cytosolic Mg(2+) and Mg-ATP concentrations seem to be sufficient to block native TRPM7 channel activity. TRPM7 channel activity is highly dependent on membrane levels of phosphatidylinositol 4,5 bisphosphate (PIP2). PIP2 hydrolysis negatively regulates TRPM7 channel activity. TRPM7 kinase activity does not affect channel activity. The kinase activity is controlled through the autophosphorylation of a serine/threonine-rich region located N-terminal to the catalytic domain. Bifunctional protein that combines an ion channel with an intrinsic kinase domain, enabling it to modulate cellular functions either by conducting ions through the pore or by phosphorylating downstream proteins via its kinase domain. The channel is highly permeable to divalent cations, specifically calcium (Ca2+), magnesium (Mg2+) and zinc (Zn2+) and mediates their influx. Controls a wide range of biological processes such as Ca2(+), Mg(2+) and Zn(2+) homeostasis, vesicular Zn(2+) release channel and intracellular Ca(2+) signaling, embryonic development, immune responses, cell motility, proliferation and differentiation. The C-terminal alpha-kinase domain autophosphorylates cytoplasmic residues of TRPM7. In vivo, TRPM7 phosphorylates SMAD2, suggesting that TRPM7 kinase may play a role in activating SMAD signaling pathways. In vitro, TRPM7 kinase phosphorylates ANXA1 (annexin A1), myosin II isoforms and a variety of proteins with diverse cellular functions. Its function is as follows. The cleaved channel exhibits substantially higher current and potentiates Fas receptor signaling. Functionally, the C-terminal kinase domain can be cleaved from the channel segment in a cell-type-specific fashion. In immune cells, the TRPM7 kinase domain is clipped from the channel domain by caspases in response to Fas-receptor stimulation. The cleaved kinase fragments can translocate to the nucleus, and bind chromatin-remodeling complex proteins in a Zn(2+)-dependent manner to ultimately phosphorylate specific Ser/Thr residues of histones known to be functionally important for cell differentiation and embryonic development. This Homo sapiens (Human) protein is Transient receptor potential cation channel subfamily M member 7 (TRPM7).